We begin with the raw amino-acid sequence, 460 residues long: Exodeoxyribonuclease 7 large subunit (460 aa).

The segment at 438–460 (ARVEKVNREEEKQSGSQKNGTRD) is disordered. Residues 439–450 (RVEKVNREEEKQ) are compositionally biased toward basic and acidic residues. The segment covering 451–460 (SGSQKNGTRD) has biased composition (polar residues).

The protein belongs to the XseA family. Heterooligomer composed of large and small subunits.

Its subcellular location is the cytoplasm. The enzyme catalyses Exonucleolytic cleavage in either 5'- to 3'- or 3'- to 5'-direction to yield nucleoside 5'-phosphates.. Bidirectionally degrades single-stranded DNA into large acid-insoluble oligonucleotides, which are then degraded further into small acid-soluble oligonucleotides. The chain is Exodeoxyribonuclease 7 large subunit from Brevibacillus brevis (strain 47 / JCM 6285 / NBRC 100599).